Here is a 938-residue protein sequence, read N- to C-terminus: MSDYKNTLNLPETGFPMRGDLAKREPDMLKRWYEQDLYGIIRAAKKGKKTFILHDGPPYANGNIHIGHSVNKILKDIIVKSKGMAGYDSPYIPGWDCHGLPIELKVEQLIGKPGEKVSAAEFRTACRKYAAEQVEGQKKDFIRLGVLGDWDHPYLTMDFKTEANIIRALSKIIDNGHLHKGAKPVHWCTDCGSSLAEAEVEYYDKTSQSIDVRFNAVDTATVAAKFGVSAVNGPISLVIWTTTPWTLPANRAISLNAEYLYQLVQVEGECLILAADLVESVMKRAGITQWAVLGSCTGSDLELLRFTHPFMGFDVPAILGDHVTLDAGTGAVHTAPGHGPDDFVIGQKYGLEVANPVGPNGCYLAGTYPTLDGLFVFKANDVVVELLREKGALLHVEKLLHSYPCCWRHKTPIIFRATPQWFISMDQKGLRKQSLQEIKGVQWIPDWGQARIETMVANRPDWCISRQRTWGVPMSLFVHKETEQLHPRSIELMEEVAKRVEQDGIQAWWDLDPAEILGADAADYVKVPDTLDVWFDSGSTHSSVVDVRPEFGGHSPDMYLEGSDQHRGWFMSSLMIATAMKGKAPYRQVLTHGFTVDGQGRKMSKSIGNTISPQDVMNKLGGDILRLWVASTDYTGEIAVSDEILKRSADSYRRIRNTARFLLANLNGFDPAQHQVKPEEMVVVDRWAVGRAQAAQAEIMEAYENYDFHLVVQRLMQFCSVEMGSFYLDIIKDRQYTAKGDGIARRSCQTALFHIAEALVRWMAPIMSFTADEIWNHLPGERQQYVFTEEWYDGLFGLAGNESMNDTFWAELLKVRGEVNKVLEQARSDKRIGGSLEAAVTLYAEPELAARLNSLQDELRFVLLTSAAKVAAYADAGNDAQQSELIAGLKITFNKADGEKCPRCWHYTQDVGLVAEHAELCGRCVTNVAGDGEERKFA.

Positions 58–68 (PYANGNIHIGH) match the 'HIGH' region motif. L-isoleucyl-5'-AMP is bound at residue Glu-561. The 'KMSKS' region signature appears at 602–606 (KMSKS). Lys-605 contributes to the ATP binding site. 4 residues coordinate Zn(2+): Cys-901, Cys-904, Cys-921, and Cys-924.

This sequence belongs to the class-I aminoacyl-tRNA synthetase family. IleS type 1 subfamily. In terms of assembly, monomer. Zn(2+) is required as a cofactor.

The protein localises to the cytoplasm. It carries out the reaction tRNA(Ile) + L-isoleucine + ATP = L-isoleucyl-tRNA(Ile) + AMP + diphosphate. Functionally, catalyzes the attachment of isoleucine to tRNA(Ile). As IleRS can inadvertently accommodate and process structurally similar amino acids such as valine, to avoid such errors it has two additional distinct tRNA(Ile)-dependent editing activities. One activity is designated as 'pretransfer' editing and involves the hydrolysis of activated Val-AMP. The other activity is designated 'posttransfer' editing and involves deacylation of mischarged Val-tRNA(Ile). The protein is Isoleucine--tRNA ligase of Yersinia pestis bv. Antiqua (strain Angola).